Consider the following 252-residue polypeptide: MILHAQAKHGKPGLPWLVFLHGFSGDCHEWQEVGEVFADYSRLYVDLPGHGGSAAISVDGFDDVTGLLCKTLVSYNIPDFWLVGYSLGGRVAMMAACQGLAGLCGVVVEGGHPGLQNAEQRTERQRSDRQWAQRFRTEPLTAVFADWYQQPVFASLNDEQRRELVALRSNNNGATLAAMLEATSLAVQPDLRANLSARTFAFYYLCGERDSKFRALAAELAAECYVIPRAGHNAHRENPAGVIASLAQILRF.

This sequence belongs to the AB hydrolase superfamily. MenH family. In terms of assembly, monomer.

It catalyses the reaction 5-enolpyruvoyl-6-hydroxy-2-succinyl-cyclohex-3-ene-1-carboxylate = (1R,6R)-6-hydroxy-2-succinyl-cyclohexa-2,4-diene-1-carboxylate + pyruvate. It participates in quinol/quinone metabolism; 1,4-dihydroxy-2-naphthoate biosynthesis; 1,4-dihydroxy-2-naphthoate from chorismate: step 3/7. The protein operates within quinol/quinone metabolism; menaquinone biosynthesis. Its function is as follows. Catalyzes a proton abstraction reaction that results in 2,5-elimination of pyruvate from 2-succinyl-5-enolpyruvyl-6-hydroxy-3-cyclohexene-1-carboxylate (SEPHCHC) and the formation of 2-succinyl-6-hydroxy-2,4-cyclohexadiene-1-carboxylate (SHCHC). The sequence is that of 2-succinyl-6-hydroxy-2,4-cyclohexadiene-1-carboxylate synthase from Escherichia coli O7:K1 (strain IAI39 / ExPEC).